The chain runs to 96 residues: Redox-responsive transcriptional regulator WhiB3 (96 aa).

Residues 22–86 (LCRGVDSSMF…GGLSESEREL (65 aa)) enclose the 4Fe-4S Wbl-type domain. 4 residues coordinate [4Fe-4S] cluster: C23, C53, C56, and C62.

The protein belongs to the WhiB family. [4Fe-4S] cluster serves as cofactor. In terms of processing, the Fe-S cluster can be nitrosylated by nitric oxide (NO). Post-translationally, upon Fe-S cluster removal intramolecular disulfide bonds are formed.

It localises to the cytoplasm. Functionally, a redox-sensitive transcriptional regulator. Maintains intracellular redox homeostasis by regulating catabolic metabolism and polyketide biosynthesis. Regulates expression of the redox buffer ergothioneine (ERG). In concert with myothiol (MSH), another redox buffer, responds to low pH leading to acid resistance. The apo- but not holo-form probably binds DNA. The polypeptide is Redox-responsive transcriptional regulator WhiB3 (whiB3) (Mycolicibacterium smegmatis (strain ATCC 700084 / mc(2)155) (Mycobacterium smegmatis)).